Consider the following 407-residue polypeptide: Geranylgeranyl diphosphate reductase (407 aa).

Belongs to the geranylgeranyl reductase family. ChlP subfamily.

The catalysed reaction is phytyl diphosphate + 3 NADP(+) = geranylgeranyl diphosphate + 3 NADPH + 3 H(+). Its pathway is porphyrin-containing compound metabolism; chlorophyll biosynthesis. Its function is as follows. Catalyzes the stepwise hydrogenation of geranylgeraniol to phytol during chlorophyll A (ChlA) biosynthesis. The protein is Geranylgeranyl diphosphate reductase (chlP) of Synechocystis sp. (strain ATCC 27184 / PCC 6803 / Kazusa).